The chain runs to 110 residues: Hydrogenase maturation factor HypA (110 aa).

H2 serves as a coordination point for Ni(2+). Residues C70, C73, C86, and C89 each contribute to the Zn(2+) site.

The protein belongs to the HypA/HybF family.

Its function is as follows. Involved in the maturation of [NiFe] hydrogenases. Required for nickel insertion into the metal center of the hydrogenase. The protein is Hydrogenase maturation factor HypA of Geobacter sulfurreducens (strain ATCC 51573 / DSM 12127 / PCA).